The sequence spans 146 residues: Prepilin peptidase-dependent protein D (146 aa).

Positions Met-1–Gly-6 are cleaved as a propeptide — leader sequence. Phe-7 is modified (N-methylphenylalanine). The chain crosses the membrane as a helical span at residues Phe-7–Ile-27.

The protein belongs to the N-Me-Phe pilin family.

It is found in the fimbrium. It localises to the membrane. Major component of the type IV pilus (T4P) that plays a role in cell adhesion and motility. Not produced when grown under standard laboratory conditions. The chain is Prepilin peptidase-dependent protein D (ppdD) from Escherichia coli (strain K12).